We begin with the raw amino-acid sequence, 494 residues long: Aspartyl/glutamyl-tRNA(Asn/Gln) amidotransferase subunit B (494 aa).

The protein belongs to the GatB/GatE family. GatB subfamily. In terms of assembly, heterotrimer of A, B and C subunits.

The enzyme catalyses L-glutamyl-tRNA(Gln) + L-glutamine + ATP + H2O = L-glutaminyl-tRNA(Gln) + L-glutamate + ADP + phosphate + H(+). It catalyses the reaction L-aspartyl-tRNA(Asn) + L-glutamine + ATP + H2O = L-asparaginyl-tRNA(Asn) + L-glutamate + ADP + phosphate + 2 H(+). Allows the formation of correctly charged Asn-tRNA(Asn) or Gln-tRNA(Gln) through the transamidation of misacylated Asp-tRNA(Asn) or Glu-tRNA(Gln) in organisms which lack either or both of asparaginyl-tRNA or glutaminyl-tRNA synthetases. The reaction takes place in the presence of glutamine and ATP through an activated phospho-Asp-tRNA(Asn) or phospho-Glu-tRNA(Gln). The protein is Aspartyl/glutamyl-tRNA(Asn/Gln) amidotransferase subunit B of Synechococcus sp. (strain ATCC 27144 / PCC 6301 / SAUG 1402/1) (Anacystis nidulans).